We begin with the raw amino-acid sequence, 485 residues long: UDP-N-acetylmuramate--L-alanine ligase (485 aa).

Gly-120–Thr-126 serves as a coordination point for ATP.

This sequence belongs to the MurCDEF family.

Its subcellular location is the cytoplasm. The enzyme catalyses UDP-N-acetyl-alpha-D-muramate + L-alanine + ATP = UDP-N-acetyl-alpha-D-muramoyl-L-alanine + ADP + phosphate + H(+). It functions in the pathway cell wall biogenesis; peptidoglycan biosynthesis. Its function is as follows. Cell wall formation. The polypeptide is UDP-N-acetylmuramate--L-alanine ligase (Rickettsia rickettsii (strain Iowa)).